Reading from the N-terminus, the 83-residue chain is Cytochrome b559 subunit alpha (83 aa).

The helical transmembrane segment at 21-35 (VIHSITIPSLFIAGW) threads the bilayer. Histidine 23 contributes to the heme binding site.

It belongs to the PsbE/PsbF family. In terms of assembly, heterodimer of an alpha subunit and a beta subunit. PSII is composed of 1 copy each of membrane proteins PsbA, PsbB, PsbC, PsbD, PsbE, PsbF, PsbH, PsbI, PsbJ, PsbK, PsbL, PsbM, PsbT, PsbX, PsbY, PsbZ, Psb30/Ycf12, at least 3 peripheral proteins of the oxygen-evolving complex and a large number of cofactors. It forms dimeric complexes. It depends on heme b as a cofactor.

It is found in the plastid. It localises to the chloroplast thylakoid membrane. In terms of biological role, this b-type cytochrome is tightly associated with the reaction center of photosystem II (PSII). PSII is a light-driven water:plastoquinone oxidoreductase that uses light energy to abstract electrons from H(2)O, generating O(2) and a proton gradient subsequently used for ATP formation. It consists of a core antenna complex that captures photons, and an electron transfer chain that converts photonic excitation into a charge separation. The chain is Cytochrome b559 subunit alpha from Adiantum capillus-veneris (Maidenhair fern).